Reading from the N-terminus, the 137-residue chain is Nucleoside diphosphate kinase (137 aa).

The ATP site is built by K9, F57, R85, T91, R102, and N112. Catalysis depends on H115, which acts as the Pros-phosphohistidine intermediate.

The protein belongs to the NDK family. In terms of assembly, homotetramer. Requires Mg(2+) as cofactor.

It localises to the cytoplasm. The catalysed reaction is a 2'-deoxyribonucleoside 5'-diphosphate + ATP = a 2'-deoxyribonucleoside 5'-triphosphate + ADP. The enzyme catalyses a ribonucleoside 5'-diphosphate + ATP = a ribonucleoside 5'-triphosphate + ADP. In terms of biological role, major role in the synthesis of nucleoside triphosphates other than ATP. The ATP gamma phosphate is transferred to the NDP beta phosphate via a ping-pong mechanism, using a phosphorylated active-site intermediate. In Leptospira interrogans serogroup Icterohaemorrhagiae serovar Lai (strain 56601), this protein is Nucleoside diphosphate kinase.